The sequence spans 165 residues: Large ribosomal subunit protein uL11 (165 aa).

The protein belongs to the universal ribosomal protein uL11 family. In terms of assembly, component of the large ribosomal subunit. Mature ribosomes consist of a small (40S) and a large (60S) subunit. The 40S subunit contains about 32 different proteins and 1 molecule of RNA (18S). The 60S subunit contains 45 different proteins and 3 molecules of RNA (25S, 5.8S and 5S).

The protein resides in the cytoplasm. Functionally, component of the ribosome, a large ribonucleoprotein complex responsible for the synthesis of proteins in the cell. The small ribosomal subunit (SSU) binds messenger RNAs (mRNAs) and translates the encoded message by selecting cognate aminoacyl-transfer RNA (tRNA) molecules. The large subunit (LSU) contains the ribosomal catalytic site termed the peptidyl transferase center (PTC), which catalyzes the formation of peptide bonds, thereby polymerizing the amino acids delivered by tRNAs into a polypeptide chain. The nascent polypeptides leave the ribosome through a tunnel in the LSU and interact with protein factors that function in enzymatic processing, targeting, and the membrane insertion of nascent chains at the exit of the ribosomal tunnel. In Candida albicans (strain SC5314 / ATCC MYA-2876) (Yeast), this protein is Large ribosomal subunit protein uL11 (RPL12).